Here is a 941-residue protein sequence, read N- to C-terminus: Pre-mRNA-processing factor 6 (941 aa).

The tract at residues 1–79 (MNKKKKPFLG…DEDLNDTNYD (79 aa)) is disordered. A compositionally biased stretch (basic and acidic residues) spans 39–65 (DANDPVDDRHAPPGKRTVGDQMKKNQA). Acidic residues predominate over residues 66-78 (ADDDDEDLNDTNY). Ser-143 is modified (phosphoserine). Phosphothreonine is present on residues Thr-180, Thr-266, and Thr-275. Residue Ser-279 is modified to Phosphoserine. HAT repeat units follow at residues 384-416 (TDIRAKKRVLRKALEHVPNSVRLWKAAVELEEP), 418-444 (DARIMLSRAVECCPTSVELWLALARLE), 445-476 (TYENARKVLNKARENIPTDRHIWITAAKLEEA), 554-586 (NALECARAIYAYALQVFPSKKSVWLRAAYFEKN), 588-620 (GTRESLEALLQRAVAHCPKAEVLWLMGAKSKWL), 622-654 (GDVPAARSILALAFQANPNSEEIWLAAVKLESE), 689-721 (GNITAAQELCEEALRHYEDFPKLWMMKGQIEEQ), 723-755 (ELMERAREAYNQGLKKCPHSTPLWLLLSRLEEK), and 855-887 (RKITKAREWFHRTVKIDSDLGDAWAFFYKFELQ).

As to quaternary structure, identified in the spliceosome B complex. Identified in the spliceosome C complex. Associates with the U5 snRNP particle. Component of the U4/U6-U5 tri-snRNP complex composed of the U4, U6 and U5 snRNAs and at least PRPF3, PRPF4, PRPF6, PRPF8, PRPF31, SNRNP200, TXNL4A, SNRNP40, DDX23, CD2BP2, PPIH, SNU13, EFTUD2, SART1 and USP39, LSm proteins LSm2-8 and Sm proteins. Interacts with ARAF1. Interacts with AR and NR3C1, but not ESR1, independently of the presence of hormones. Interacts with USH1G. In terms of processing, phosphorylated by PRP4K during spliceosome assembly.

The protein resides in the nucleus. The protein localises to the nucleoplasm. It localises to the nucleus speckle. Functionally, involved in pre-mRNA splicing as component of the U4/U6-U5 tri-snRNP complex, one of the building blocks of the spliceosome. Enhances dihydrotestosterone-induced transactivation activity of AR, as well as dexamethasone-induced transactivation activity of NR3C1, but does not affect estrogen-induced transactivation. The polypeptide is Pre-mRNA-processing factor 6 (Prpf6) (Rattus norvegicus (Rat)).